The following is a 234-amino-acid chain: tRNA1(Val) (adenine(37)-N6)-methyltransferase (234 aa).

It belongs to the methyltransferase superfamily. tRNA (adenine-N(6)-)-methyltransferase family.

It is found in the cytoplasm. The enzyme catalyses adenosine(37) in tRNA1(Val) + S-adenosyl-L-methionine = N(6)-methyladenosine(37) in tRNA1(Val) + S-adenosyl-L-homocysteine + H(+). Its function is as follows. Specifically methylates the adenine in position 37 of tRNA(1)(Val) (anticodon cmo5UAC). This is tRNA1(Val) (adenine(37)-N6)-methyltransferase from Aliivibrio fischeri (strain MJ11) (Vibrio fischeri).